The sequence spans 229 residues: 5'-methylthioadenosine/S-adenosylhomocysteine nucleosidase (229 aa).

The Proton acceptor role is filled by Glu-12. Substrate-binding positions include Gly-78, Ile-152, and 173-174 (ME). The active-site Proton donor is Asp-197.

It belongs to the PNP/UDP phosphorylase family. MtnN subfamily.

It catalyses the reaction S-adenosyl-L-homocysteine + H2O = S-(5-deoxy-D-ribos-5-yl)-L-homocysteine + adenine. The catalysed reaction is S-methyl-5'-thioadenosine + H2O = 5-(methylsulfanyl)-D-ribose + adenine. It carries out the reaction 5'-deoxyadenosine + H2O = 5-deoxy-D-ribose + adenine. It functions in the pathway amino-acid biosynthesis; L-methionine biosynthesis via salvage pathway; S-methyl-5-thio-alpha-D-ribose 1-phosphate from S-methyl-5'-thioadenosine (hydrolase route): step 1/2. Functionally, catalyzes the irreversible cleavage of the glycosidic bond in both 5'-methylthioadenosine (MTA) and S-adenosylhomocysteine (SAH/AdoHcy) to adenine and the corresponding thioribose, 5'-methylthioribose and S-ribosylhomocysteine, respectively. Also cleaves 5'-deoxyadenosine, a toxic by-product of radical S-adenosylmethionine (SAM) enzymes, into 5-deoxyribose and adenine. The polypeptide is 5'-methylthioadenosine/S-adenosylhomocysteine nucleosidase (Histophilus somni (strain 129Pt) (Haemophilus somnus)).